Reading from the N-terminus, the 295-residue chain is Cyclin-G1 (295 aa).

The protein belongs to the cyclin family. Cyclin G subfamily.

Its subcellular location is the nucleus. Functionally, may play a role in growth regulation. Is associated with G2/M phase arrest in response to DNA damage. May be an intermediate by which p53 mediates its role as an inhibitor of cellular proliferation. This is Cyclin-G1 (CCNG1) from Bos taurus (Bovine).